The following is a 184-amino-acid chain: ATP synthase subunit b, chloroplastic (184 aa).

Residues 27-49 (LATNPINLSVVLGVLIFFGKGVL) traverse the membrane as a helical segment.

This sequence belongs to the ATPase B chain family. In terms of assembly, F-type ATPases have 2 components, F(1) - the catalytic core - and F(0) - the membrane proton channel. F(1) has five subunits: alpha(3), beta(3), gamma(1), delta(1), epsilon(1). F(0) has four main subunits: a(1), b(1), b'(1) and c(10-14). The alpha and beta chains form an alternating ring which encloses part of the gamma chain. F(1) is attached to F(0) by a central stalk formed by the gamma and epsilon chains, while a peripheral stalk is formed by the delta, b and b' chains.

It is found in the plastid. It localises to the chloroplast thylakoid membrane. In terms of biological role, f(1)F(0) ATP synthase produces ATP from ADP in the presence of a proton or sodium gradient. F-type ATPases consist of two structural domains, F(1) containing the extramembraneous catalytic core and F(0) containing the membrane proton channel, linked together by a central stalk and a peripheral stalk. During catalysis, ATP synthesis in the catalytic domain of F(1) is coupled via a rotary mechanism of the central stalk subunits to proton translocation. Component of the F(0) channel, it forms part of the peripheral stalk, linking F(1) to F(0). This Nicotiana tomentosiformis (Tobacco) protein is ATP synthase subunit b, chloroplastic.